Reading from the N-terminus, the 135-residue chain is Holo-[acyl-carrier-protein] synthase (135 aa).

Residues Asp-7 and Glu-57 each contribute to the Mg(2+) site.

The protein belongs to the P-Pant transferase superfamily. AcpS family. The cofactor is Mg(2+).

It is found in the cytoplasm. The enzyme catalyses apo-[ACP] + CoA = holo-[ACP] + adenosine 3',5'-bisphosphate + H(+). Functionally, transfers the 4'-phosphopantetheine moiety from coenzyme A to a Ser of acyl-carrier-protein. The polypeptide is Holo-[acyl-carrier-protein] synthase (Corynebacterium glutamicum (strain R)).